Reading from the N-terminus, the 287-residue chain is U1 small nuclear ribonucleoprotein A (287 aa).

In terms of domain architecture, RRM 1 spans 16 to 95 (HTIYINNLNE…KPMRIQYAKT (80 aa)). Lysine 66 carries the post-translational modification N6-acetyllysine. Residues 106–134 (TYVERDRKREKRKPKSQETPAAKKAVQGG) form a disordered region. Over residues 125 to 134 (PAAKKAVQGG) the composition is skewed to low complexity. Residue arginine 157 is modified to Omega-N-methylarginine. In terms of domain architecture, RRM 2 spans 213-287 (HILFLTNLPE…NAMKISFAKK (75 aa)).

This sequence belongs to the RRM U1 A/B'' family. In terms of assembly, U1 snRNP is composed of the 7 core Sm proteins SNRPB, SNRPD1, SNRPD2, SNRPD3, SNRPE, SNRPF and SNRPG that assemble in a heptameric protein ring on the Sm site of the small nuclear RNA to form the core snRNP, and at least three U1 snRNP-specific proteins SNRNP70/U1-70K, SNRPA/U1-A and SNRPC/U1-C. Interacts with SFPQ; component of a snRNP-free complex with SFPQ. Interacts with IVNS1ABP (via BACK domain); the interaction is indirect.

The protein localises to the nucleus. Its function is as follows. Component of the spliceosomal U1 snRNP, which is essential for recognition of the pre-mRNA 5' splice-site and the subsequent assembly of the spliceosome. U1 snRNP is the first snRNP to interact with pre-mRNA. This interaction is required for the subsequent binding of U2 snRNP and the U4/U6/U5 tri-snRNP. SNRPA binds stem loop II of U1 snRNA. In a snRNP-free form (SF-A) may be involved in coupled pre-mRNA splicing and polyadenylation process. May bind preferentially to the 5'-UGCAC-3' motif on RNAs. This Mus musculus (Mouse) protein is U1 small nuclear ribonucleoprotein A (Snrpa).